A 333-amino-acid polypeptide reads, in one-letter code: Serine/threonine-protein phosphatase PP1-beta (333 aa).

Residues Asp-63, His-65, Asp-91, and Asn-123 each contribute to the Mn(2+) site. Catalysis depends on His-124, which acts as the Proton donor. 2 residues coordinate Mn(2+): His-172 and His-247. The tract at residues Gly-306–Lys-333 is disordered. Over residues Ala-322 to Lys-333 the composition is skewed to low complexity.

It belongs to the PPP phosphatase family. PP-1 subfamily. Interacts with lab-1; the interaction is direct. Interacts with knl-1; the interaction is direct. Mn(2+) serves as cofactor. In terms of tissue distribution, expressed in gonads, nervous system, intestine and muscles.

The protein resides in the cytoplasm. It is found in the nucleus. The catalysed reaction is O-phospho-L-seryl-[protein] + H2O = L-seryl-[protein] + phosphate. It carries out the reaction O-phospho-L-threonyl-[protein] + H2O = L-threonyl-[protein] + phosphate. Inhibited by okadaic acid. Functionally, serine/threonine-protein phosphatase essential for chromosomal dynamics during meiosis and mitosis. During meiosis, promotes chromosomal cohesion and germline immortality via a small RNA-mediated genome silencing pathway. Antagonizes the function of air-2 kinase during meiosis I and mitosis to promote chromatid cohesion and spindle attachment. Dephosphorylates histone H3 at 'Ser-10'. Dephosphorylates histone H3 at 'Thr-3'. Also involved in the activation of chloride channel clh-3 during cell swelling and meiotic maturation. Promotes small RNA-mediated genome silencing over multiple generations. Essential for embryogenesis. In Caenorhabditis elegans, this protein is Serine/threonine-protein phosphatase PP1-beta.